The primary structure comprises 23 residues: Acidic phospholipase A2 CTs-A1 (23 aa).

Ca(2+) is required as a cofactor. In terms of processing, contains 7 disulfide bonds. In terms of tissue distribution, expressed by the venom gland.

Its subcellular location is the secreted. The catalysed reaction is a 1,2-diacyl-sn-glycero-3-phosphocholine + H2O = a 1-acyl-sn-glycero-3-phosphocholine + a fatty acid + H(+). Its function is as follows. Snake venom phospholipase A2 (PLA2) that shows a moderate inhibition of ADP-induced human platelet aggregation when tested on platelet rich plasma. Exhibits moderate hydrolytic activities and prefers the anionic micelles (dPPC with deoxycholate) to the zwitterionic micelles (dPPC with Triton X-100). PLA2 catalyzes the calcium-dependent hydrolysis of the 2-acyl groups in 3-sn-phosphoglycerides. This Trimeresurus stejnegeri (Chinese green tree viper) protein is Acidic phospholipase A2 CTs-A1.